Here is a 192-residue protein sequence, read N- to C-terminus: Inosine triphosphate pyrophosphatase (192 aa).

Position 10 to 15 (10 to 15 (TGNANK)) interacts with ITP. Position 46 (glutamate 46) interacts with Mg(2+). Residues lysine 58, 74–75 (DT), lysine 91, 149–152 (FGWD), lysine 172, and 177–178 (HR) contribute to the ITP site.

This sequence belongs to the HAM1 NTPase family. As to quaternary structure, homodimer. The cofactor is Mg(2+). Mn(2+) serves as cofactor.

The protein localises to the cytoplasm. Its subcellular location is the nucleus. It carries out the reaction ITP + H2O = IMP + diphosphate + H(+). It catalyses the reaction dITP + H2O = dIMP + diphosphate + H(+). The enzyme catalyses XTP + H2O = XMP + diphosphate + H(+). Pyrophosphatase that hydrolyzes non-canonical purine nucleotides such as inosine triphosphate (ITP), deoxyinosine triphosphate (dITP) or xanthosine 5'-triphosphate (XTP) to their respective monophosphate derivatives. The enzyme does not distinguish between the deoxy- and ribose forms. Probably excludes non-canonical purines from RNA and DNA precursor pools, thus preventing their incorporation into RNA and DNA and avoiding chromosomal lesions. The chain is Inosine triphosphate pyrophosphatase from Puccinia graminis f. sp. tritici (strain CRL 75-36-700-3 / race SCCL) (Black stem rust fungus).